A 306-amino-acid chain; its full sequence is MNWITNYVRPRINSMLGRRDVPDNLWIKCPETGEMVFHKDLEENKWVVPASGYHMKMPAKARLADLFDGGKYEAFAQPKVAQDPLKFRDSKKYSDRLKDSRTKTEQEDTIVAGLGTVEGLKLVAVVHEFNFMGGSLGIAAGEAIVKAFERAIAEKCPLVMFPASGGARMQEGILSLMQLPRTTVAVDLLKEAGLPYIVVLTNPTTGGVTASYAMLGDLHIAEPGAEICFAGKRVIEQTIREKLPEGFQTSEYLLEHGMVDMVVKRHDIPATLARTLKILTKQPATVVGANDDKTLSVIEASRAVSA.

The region spanning 25–294 (LWIKCPETGE…TVVGANDDKT (270 aa)) is the CoA carboxyltransferase N-terminal domain.

Belongs to the AccD/PCCB family. In terms of assembly, acetyl-CoA carboxylase is a heterohexamer composed of biotin carboxyl carrier protein (AccB), biotin carboxylase (AccC) and two subunits each of ACCase subunit alpha (AccA) and ACCase subunit beta (AccD).

The protein resides in the cytoplasm. It carries out the reaction N(6)-carboxybiotinyl-L-lysyl-[protein] + acetyl-CoA = N(6)-biotinyl-L-lysyl-[protein] + malonyl-CoA. It participates in lipid metabolism; malonyl-CoA biosynthesis; malonyl-CoA from acetyl-CoA: step 1/1. Component of the acetyl coenzyme A carboxylase (ACC) complex. Biotin carboxylase (BC) catalyzes the carboxylation of biotin on its carrier protein (BCCP) and then the CO(2) group is transferred by the transcarboxylase to acetyl-CoA to form malonyl-CoA. The sequence is that of Acetyl-coenzyme A carboxylase carboxyl transferase subunit beta from Allorhizobium ampelinum (strain ATCC BAA-846 / DSM 112012 / S4) (Agrobacterium vitis (strain S4)).